The following is a 205-amino-acid chain: MIQGIIGKKIGMTQIFQEDGKAQPVTLVEAGPCVVVQVKTEKQDGYEAVQLGYGKAKHITSAVKGQCRGFGEFKVLREVDVDDIAAVNVGDQITVSDFKDGEKIDASGVSRGRGFAGVVKRWHFAGGPKTHGQSDRHRAPGSISSTTTPGRIYKGKRMAGHMGNDAVTIRNLVVLKTDAEKNLLMVKGAIPGGKNTIILIKKTGK.

A disordered region spans residues 126–150; it reads GGPKTHGQSDRHRAPGSISSTTTPG.

The protein belongs to the universal ribosomal protein uL3 family. Part of the 50S ribosomal subunit. Forms a cluster with proteins L14 and L19.

Functionally, one of the primary rRNA binding proteins, it binds directly near the 3'-end of the 23S rRNA, where it nucleates assembly of the 50S subunit. This is Large ribosomal subunit protein uL3 from Dehalococcoides mccartyi (strain ATCC BAA-2266 / KCTC 15142 / 195) (Dehalococcoides ethenogenes (strain 195)).